A 306-amino-acid chain; its full sequence is Myb family transcription factor MOF1 (306 aa).

The 61-residue stretch at 19-79 folds into the HTH myb-type domain; the sequence is RSKVPRLRWT…HLQMYRCSRL (61 aa). A DNA-binding region (H-T-H motif) is located at residues 50–75; that stretch reads PKLILQLMGVKGLTISHVKSHLQMYR.

As to quaternary structure, interacts with TPR1, TPR2 and TPR3. In terms of tissue distribution, expressed in roots, leaves, leaf sheaths, culms, panicles, lemmas, paleas, lodicules, stamens, and pistils.

The protein resides in the nucleus. In terms of biological role, transcriptional repressor that plays a role in the regulation of organ identity and spikelet meristem determinacy. Interacts with the TPR corepressors to possibly repress the expression of downstream target genes. This Oryza sativa subsp. japonica (Rice) protein is Myb family transcription factor MOF1.